The following is a 140-amino-acid chain: Endoribonuclease YbeY (140 aa).

Residues histidine 99, histidine 103, and histidine 109 each contribute to the Zn(2+) site.

It belongs to the endoribonuclease YbeY family. Zn(2+) serves as cofactor.

It is found in the cytoplasm. Functionally, single strand-specific metallo-endoribonuclease involved in late-stage 70S ribosome quality control and in maturation of the 3' terminus of the 16S rRNA. The chain is Endoribonuclease YbeY from Wolinella succinogenes (strain ATCC 29543 / DSM 1740 / CCUG 13145 / JCM 31913 / LMG 7466 / NCTC 11488 / FDC 602W) (Vibrio succinogenes).